Here is a 330-residue protein sequence, read N- to C-terminus: Glycerol-3-phosphate dehydrogenase [NAD(P)+] (330 aa).

Residues W11, R31, H32, and K105 each contribute to the NADPH site. Residues K105 and G133 each coordinate sn-glycerol 3-phosphate. A137 lines the NADPH pocket. K188, D241, S251, R252, and N253 together coordinate sn-glycerol 3-phosphate. The Proton acceptor role is filled by K188. R252 contributes to the NADPH binding site. 2 residues coordinate NADPH: L277 and E279.

This sequence belongs to the NAD-dependent glycerol-3-phosphate dehydrogenase family.

Its subcellular location is the cytoplasm. It catalyses the reaction sn-glycerol 3-phosphate + NAD(+) = dihydroxyacetone phosphate + NADH + H(+). It carries out the reaction sn-glycerol 3-phosphate + NADP(+) = dihydroxyacetone phosphate + NADPH + H(+). Its pathway is membrane lipid metabolism; glycerophospholipid metabolism. Its function is as follows. Catalyzes the reduction of the glycolytic intermediate dihydroxyacetone phosphate (DHAP) to sn-glycerol 3-phosphate (G3P), the key precursor for phospholipid synthesis. The chain is Glycerol-3-phosphate dehydrogenase [NAD(P)+] from Orientia tsutsugamushi (strain Boryong) (Rickettsia tsutsugamushi).